The sequence spans 356 residues: 3-dehydroquinate synthase (356 aa).

NAD(+) contacts are provided by residues 71–76 (EGEASK), 105–109 (GVTGD), 129–130 (TS), lysine 142, and lysine 151. Zn(2+) contacts are provided by glutamate 184, histidine 247, and histidine 264.

Belongs to the sugar phosphate cyclases superfamily. Dehydroquinate synthase family. It depends on Co(2+) as a cofactor. Requires Zn(2+) as cofactor. NAD(+) is required as a cofactor.

It localises to the cytoplasm. The catalysed reaction is 7-phospho-2-dehydro-3-deoxy-D-arabino-heptonate = 3-dehydroquinate + phosphate. It participates in metabolic intermediate biosynthesis; chorismate biosynthesis; chorismate from D-erythrose 4-phosphate and phosphoenolpyruvate: step 2/7. Its function is as follows. Catalyzes the conversion of 3-deoxy-D-arabino-heptulosonate 7-phosphate (DAHP) to dehydroquinate (DHQ). This Lactococcus lactis subsp. cremoris (strain MG1363) protein is 3-dehydroquinate synthase.